We begin with the raw amino-acid sequence, 596 residues long: Dihydroxy-acid dehydratase pbrD, mitochondrial (596 aa).

Residues 1-18 (MATSSIRSRALGLSRRAR) constitute a mitochondrion transit peptide. Cys84 is a [2Fe-2S] cluster binding site. Asp116 lines the Mg(2+) pocket. Cys157 contacts [2Fe-2S] cluster. Residue Asp158 coordinates Mg(2+). Position 230 (Cys230) interacts with [2Fe-2S] cluster. Mg(2+) is bound at residue Glu483. Ser509 (proton acceptor) is an active-site residue.

This sequence belongs to the IlvD/Edd family. [2Fe-2S] cluster serves as cofactor. It depends on Mg(2+) as a cofactor.

It localises to the mitochondrion. The catalysed reaction is (2R)-2,3-dihydroxy-3-methylbutanoate = 3-methyl-2-oxobutanoate + H2O. It catalyses the reaction (2R,3R)-2,3-dihydroxy-3-methylpentanoate = (S)-3-methyl-2-oxopentanoate + H2O. The protein operates within amino-acid biosynthesis; L-isoleucine biosynthesis; L-isoleucine from 2-oxobutanoate: step 3/4. It functions in the pathway amino-acid biosynthesis; L-valine biosynthesis; L-valine from pyruvate: step 3/4. DHAD activity is not inhibited by the dihydroxyacid dehydratase inhibitor aspterric acid (AA). Its function is as follows. Dihydroxyacid dehydratase; part of the gene cluster that mediates the biosynthesis of the sesquiterpenoid aspterric acid (AA), an inhibitor of dihydroxy-acid dehydratase (DHAD) effective as an herbicide. Performs the third step in the common pathway leading to biosynthesis of branched-chain amino acids. Catalyzes the dehydration of (2R,3R)-2,3-dihydroxy-3-methylpentanoate (2,3-dihydroxy-3-methylvalerate) into 2-oxo-3-methylpentanoate (2-oxo-3-methylvalerate) and of (2R)-2,3-dihydroxy-3-methylbutanoate (2,3-dihydroxyisovalerate) into 2-oxo-3-methylbutanoate (2-oxoisovalerate), the penultimate precursor to L-isoleucine and L-valine, respectively. PbrD confers self-resistance in the presence of the dihydroxyacid dehydratase inhibitor aspterric acid (AA) produced by the ast cluster. This Penicillium brasilianum protein is Dihydroxy-acid dehydratase pbrD, mitochondrial.